Reading from the N-terminus, the 131-residue chain is ATP synthase epsilon chain (131 aa).

The protein belongs to the ATPase epsilon chain family. F-type ATPases have 2 components, CF(1) - the catalytic core - and CF(0) - the membrane proton channel. CF(1) has five subunits: alpha(3), beta(3), gamma(1), delta(1), epsilon(1). CF(0) has three main subunits: a, b and c.

The protein localises to the cell membrane. Its function is as follows. Produces ATP from ADP in the presence of a proton gradient across the membrane. The sequence is that of ATP synthase epsilon chain from Clostridium novyi (strain NT).